The sequence spans 183 residues: Phosphinothricin N-acetyltransferase (183 aa).

In terms of domain architecture, N-acetyltransferase spans 8–169; the sequence is VEIRPATAAD…DVGFWQRDFE (162 aa). Acetyl-CoA contacts are provided by residues 91–93, 99–104, and Asn130; these read VYV and RLGLGS.

It belongs to the acetyltransferase family. PAT/BAR subfamily.

The enzyme catalyses phosphinothricin + acetyl-CoA = N-acetylphosphinothricin + CoA + H(+). Functionally, inactivates phosphinothricin (PPT) by transfer of an acetyl group from acetyl CoA. This enzyme is an effector of phosphinothricin tripeptide (PTT or bialaphos) resistance. The sequence is that of Phosphinothricin N-acetyltransferase from Streptomyces viridochromogenes (strain DSM 40736 / JCM 4977 / BCRC 1201 / Tue 494).